The chain runs to 363 residues: 3-isopropylmalate dehydrogenase (363 aa).

Residue glycine 78–glutamate 91 participates in NAD(+) binding. The substrate site is built by arginine 99, arginine 109, arginine 138, and aspartate 227. Positions 227, 251, and 255 each coordinate Mg(2+). Position 285-297 (glycine 285–asparagine 297) interacts with NAD(+).

It belongs to the isocitrate and isopropylmalate dehydrogenases family. LeuB type 1 subfamily. In terms of assembly, homodimer. Mg(2+) is required as a cofactor. The cofactor is Mn(2+).

It is found in the cytoplasm. The enzyme catalyses (2R,3S)-3-isopropylmalate + NAD(+) = 4-methyl-2-oxopentanoate + CO2 + NADH. It functions in the pathway amino-acid biosynthesis; L-leucine biosynthesis; L-leucine from 3-methyl-2-oxobutanoate: step 3/4. Catalyzes the oxidation of 3-carboxy-2-hydroxy-4-methylpentanoate (3-isopropylmalate) to 3-carboxy-4-methyl-2-oxopentanoate. The product decarboxylates to 4-methyl-2 oxopentanoate. The polypeptide is 3-isopropylmalate dehydrogenase (Buchnera aphidicola subsp. Uroleucon rudbeckiae).